We begin with the raw amino-acid sequence, 657 residues long: PAN2-PAN3 deadenylation complex subunit PAN3 (657 aa).

Disordered regions lie at residues 1 to 29 (MASA…HAKD), 52 to 98 (HDPS…SATI), and 115 to 135 (SRSN…EWSI). A C3H1-type zinc finger spans residues 27 to 55 (AKDTLCRNVTIYGRCRYEDKGCVFNHDPS). Basic and acidic residues predominate over residues 52-67 (HDPSRVNDAQHPERSS). 2 stretches are compositionally biased toward polar residues: residues 75–98 (DSPS…SATI) and 115–132 (SRSN…STPE). Residues 259–521 (QTLPNSQLPT…TIDIFISGIS (263 aa)) are pseudokinase domain. ATP-binding positions include arginine 311, 360-367 (DYHPLSKT), and 421-422 (SK). Residues 522–560 (SQLMSTFDSSLHLDDQLISDLSRELENARLVRLLTKLNF) adopt a coiled-coil conformation. Positions 561-657 (INERPEYEHD…QALLKPARRI (97 aa)) are knob domain.

Belongs to the protein kinase superfamily. PAN3 family. In terms of assembly, homodimer. Forms a heterotrimer with a catalytic subunit PAN2 to form the poly(A)-nuclease (PAN) deadenylation complex. Interacts (via PAM-2 motif) with poly(A)-binding protein PAB1 (via PABC domain), conferring substrate specificity of the enzyme complex.

The protein resides in the cytoplasm. Functionally, regulatory subunit of the poly(A)-nuclease (PAN) deadenylation complex, one of two cytoplasmic mRNA deadenylases involved in mRNA turnover. PAN specifically shortens poly(A) tails of RNA and the activity is stimulated by poly(A)-binding protein PAB1. PAN deadenylation is followed by rapid degradation of the shortened mRNA tails by the CCR4-NOT complex. Deadenylated mRNAs are then degraded by two alternative mechanisms, namely exosome-mediated 3'-5' exonucleolytic degradation, or deadenylation-dependent mRNA decaping and subsequent 5'-3' exonucleolytic degradation by XRN1. May also be involved in post-transcriptional maturation of mRNA poly(A) tails. PAN3 acts as a positive regulator for PAN activity, recruiting the catalytic subunit PAN2 to mRNA via its interaction with RNA and with PAB1. The sequence is that of PAN2-PAN3 deadenylation complex subunit PAN3 from Coccidioides immitis (strain RS) (Valley fever fungus).